Here is a 418-residue protein sequence, read N- to C-terminus: Glutamyl-tRNA reductase (418 aa).

Substrate-binding positions include 49 to 52, Ser108, 113 to 115, and Gln119; these read TCNR and EPQ. Cys50 serves as the catalytic Nucleophile. Residue 188–193 coordinates NADP(+); sequence GAGETI.

It belongs to the glutamyl-tRNA reductase family. Homodimer.

It catalyses the reaction (S)-4-amino-5-oxopentanoate + tRNA(Glu) + NADP(+) = L-glutamyl-tRNA(Glu) + NADPH + H(+). It participates in porphyrin-containing compound metabolism; protoporphyrin-IX biosynthesis; 5-aminolevulinate from L-glutamyl-tRNA(Glu): step 1/2. Functionally, catalyzes the NADPH-dependent reduction of glutamyl-tRNA(Glu) to glutamate 1-semialdehyde (GSA). In Aliivibrio salmonicida (strain LFI1238) (Vibrio salmonicida (strain LFI1238)), this protein is Glutamyl-tRNA reductase.